A 272-amino-acid chain; its full sequence is Cytochrome c1 (272 aa).

The N-terminal stretch at 1-24 (MTTIVKRALVAAGMVLAIGGAAQA) is a signal peptide. Heme c-binding residues include C61, C64, H65, and M200. A helical transmembrane segment spans residues 244–261 (LGLKVLLFLGVLTAMLLA).

The main subunits of complex b-c1 are: cytochrome b, cytochrome c1 and the Rieske protein. Post-translationally, binds 1 heme c group covalently per subunit.

Its subcellular location is the cell membrane. Functionally, component of the ubiquinol-cytochrome c reductase complex (complex III or cytochrome b-c1 complex), which is a respiratory chain that generates an electrochemical potential coupled to ATP synthesis. In Rhodospirillum rubrum, this protein is Cytochrome c1 (petC).